Here is a 203-residue protein sequence, read N- to C-terminus: MKVVAFERSVQGTGASRRLRNSGKTPGIIYGGAADPKMIELDHNALWHALKKEAFHSSILDLEVAGKSEKALLRAFQMHPFKPLVLHVDFQRVSANDKIHVKVPLHFMNQETAPGVKLGHGLVNHIVNDLEVSCLPADLPEFIEVDVGNMEVGQTLHLTDLKLPKGVTVVTHGDENPAIASISLPAGAASAAEGEGEGETPAA.

It belongs to the bacterial ribosomal protein bL25 family. CTC subfamily. As to quaternary structure, part of the 50S ribosomal subunit; part of the 5S rRNA/L5/L18/L25 subcomplex. Contacts the 5S rRNA. Binds to the 5S rRNA independently of L5 and L18.

This is one of the proteins that binds to the 5S RNA in the ribosome where it forms part of the central protuberance. The protein is Large ribosomal subunit protein bL25 of Cupriavidus pinatubonensis (strain JMP 134 / LMG 1197) (Cupriavidus necator (strain JMP 134)).